A 101-amino-acid chain; its full sequence is Acylphosphatase-1 (101 aa).

The residue at position 2 (Ser-2) is an N-acetylserine. Ser-2 is subject to N-acetylalanine. The Acylphosphatase-like domain occupies 11–101; that stretch reads SVDYEIFGKV…LDYTDFQIVK (91 aa). Catalysis depends on residues Arg-26 and Asn-44.

It belongs to the acylphosphatase family. As to expression, organ-common type isozyme is found in many different tissues.

It catalyses the reaction an acyl phosphate + H2O = a carboxylate + phosphate + H(+). This chain is Acylphosphatase-1 (ACYP1), found in Bos taurus (Bovine).